The following is a 203-amino-acid chain: Glycerol-3-phosphate acyltransferase (203 aa).

The next 6 helical transmembrane spans lie at 1–21 (MPAW…GSIP), 52–72 (VGKG…AAAV), 73–93 (ALGS…GAVI), 115–135 (ILLA…LLGI), 140–160 (IVSF…WALG), and 161–181 (QPLP…AAHR).

This sequence belongs to the PlsY family. In terms of assembly, probably interacts with PlsX.

The protein resides in the cell inner membrane. The enzyme catalyses an acyl phosphate + sn-glycerol 3-phosphate = a 1-acyl-sn-glycero-3-phosphate + phosphate. It functions in the pathway lipid metabolism; phospholipid metabolism. Functionally, catalyzes the transfer of an acyl group from acyl-phosphate (acyl-PO(4)) to glycerol-3-phosphate (G3P) to form lysophosphatidic acid (LPA). This enzyme utilizes acyl-phosphate as fatty acyl donor, but not acyl-CoA or acyl-ACP. This Synechococcus sp. (strain JA-3-3Ab) (Cyanobacteria bacterium Yellowstone A-Prime) protein is Glycerol-3-phosphate acyltransferase.